The following is a 364-amino-acid chain: Lysophosphatidic acid receptor 1 (364 aa).

Topologically, residues 1–50 are extracellular; it reads MAAASTSSPVISQPQFTAMNEQQCFYNESIAFFYNRSGKYLATEWNTVSK. 2 cysteine pairs are disulfide-bonded: C24–C190 and C188–C195. Residues N27 and N35 are each glycosylated (N-linked (GlcNAc...) asparagine). K39 lines the a 1-acyl-sn-glycero-3-phosphate pocket. A helical membrane pass occupies residues 51–75; it reads LVMGLGITVCVFIMLANLLVMVAIY. At 76–83 the chain is on the cytoplasmic side; that stretch reads VNRRFHFP. The helical transmembrane segment at 84 to 107 threads the bilayer; that stretch reads IYYLMANLAAADFFAGLAYFYLMF. Residues 108–121 lie on the Extracellular side of the membrane; the sequence is NTGPNTRRLTVSTW. The chain crosses the membrane as a helical span at residues 122-144; that stretch reads LLRQGLIDTSLTASVANLLAIAI. 124 to 129 is a binding site for a 1-acyl-sn-glycero-3-phosphate; sequence RQGLID. The Cytoplasmic segment spans residues 145–163; the sequence is ERHITVFRMQLHTRMSNRR. The chain crosses the membrane as a helical span at residues 164–184; sequence VVVVIVVIWTMAIVMGAIPSV. Over 185–204 the chain is Extracellular; sequence GWNCICDIDHCSNMAPLYSD. A helical membrane pass occupies residues 205-225; that stretch reads SYLVFWAIFNLVTFVVMVVLY. Position 210 (W210) interacts with a 1-acyl-sn-glycero-3-phosphate. At 226-255 the chain is on the cytoplasmic side; it reads AHIFGYVRQRTMRMSRHSSGPRRNRDTMMS. Residues 256–280 form a helical membrane-spanning segment; that stretch reads LLKTVVIVLGAFIVCWTPGLVLLLL. Over 281–294 the chain is Extracellular; it reads DVCCPQCDVLAYEK. A disulfide bridge connects residues C284 and C287. The chain crosses the membrane as a helical span at residues 295–315; that stretch reads FFLLLAEFNSAMNPIIYSYRD. At 316 to 364 the chain is on the cytoplasmic side; that stretch reads KEMSATFRQILCCQRNENPNGPTEGSDRSASSLNHTILAGVHSNDHSVV. A Phosphoserine modification is found at S341. Phosphothreonine is present on T351.

Belongs to the G-protein coupled receptor 1 family. Interacts with RALA and GRK2. Interacts with GNAQ and GNA13. Interacts with CD14; the interaction is enhanced by exposure to bacterial lipopolysaccharide (LPS). N-glycosylated. In terms of tissue distribution, detected in lung. Detected in oligodendrocytes in corpus callosum in brain cortex (at protein level). Expressed within the embryonic cerebral cortex, where it is enriched in the ventricular zone. In the adult brain, also expressed in oligodendrocytes, as well as Schwann cells of the peripheral nervous system. Expressed in many other tissues, including lung, heart, intestine, spleen, thymus, and stomach. No expression in liver. Detected in kidney and testis. Detected in embryonic fibroblasts. Detected in adult lung fibroblasts and lung endothelial cells. Detected in dorsal root ganglion and dorsal root. Detected in astrocytes. Detected in bone.

It is found in the cell surface. Its subcellular location is the cell membrane. The protein localises to the endosome. Its function is as follows. Receptor for lysophosphatidic acid (LPA). Plays a role in the reorganization of the actin cytoskeleton, cell migration, differentiation and proliferation, and thereby contributes to the responses to tissue damage and infectious agents. Activates downstream signaling cascades via the G(i)/G(o), G(12)/G(13), and G(q) families of heteromeric G proteins. Signaling inhibits adenylyl cyclase activity and decreases cellular cAMP levels. Signaling triggers an increase of cytoplasmic Ca(2+) levels. Activates RALA; this leads to the activation of phospholipase C (PLC) and the formation of inositol 1,4,5-trisphosphate. Signaling mediates activation of down-stream MAP kinases. Contributes to the regulation of cell shape. Promotes Rho-dependent reorganization of the actin cytoskeleton in neuronal cells and neurite retraction. Promotes the activation of Rho and the formation of actin stress fibers. Promotes formation of lamellipodia at the leading edge of migrating cells via activation of RAC1. Through its function as LPA receptor, plays a role in chemotaxis and cell migration, including responses to injury and wounding. Plays a role in triggering inflammation in response to bacterial lipopolysaccharide (LPS) via its interaction with CD14. Promotes cell proliferation in response to LPA. Inhibits the intracellular ciliogenesis pathway in response to LPA and through AKT1 activation. Required for normal skeleton development. May play a role in osteoblast differentiation. Required for normal brain development. Required for normal proliferation, survival and maturation of newly formed neurons in the adult dentate gyrus. Plays a role in pain perception and in the initiation of neuropathic pain. The chain is Lysophosphatidic acid receptor 1 (Lpar1) from Mus musculus (Mouse).